A 955-amino-acid polypeptide reads, in one-letter code: Isoleucine--tRNA ligase (955 aa).

Positions 60 to 70 match the 'HIGH' region motif; sequence PYANGDLHIGH. Glu563 contributes to the L-isoleucyl-5'-AMP binding site. The short motif at 604 to 608 is the 'KMSKS' region element; the sequence is KMSKS. Lys607 is a binding site for ATP. Zn(2+)-binding residues include Cys926, Cys929, Cys946, and Cys949.

It belongs to the class-I aminoacyl-tRNA synthetase family. IleS type 1 subfamily. As to quaternary structure, monomer. The cofactor is Zn(2+).

The protein resides in the cytoplasm. The enzyme catalyses tRNA(Ile) + L-isoleucine + ATP = L-isoleucyl-tRNA(Ile) + AMP + diphosphate. Its function is as follows. Catalyzes the attachment of isoleucine to tRNA(Ile). As IleRS can inadvertently accommodate and process structurally similar amino acids such as valine, to avoid such errors it has two additional distinct tRNA(Ile)-dependent editing activities. One activity is designated as 'pretransfer' editing and involves the hydrolysis of activated Val-AMP. The other activity is designated 'posttransfer' editing and involves deacylation of mischarged Val-tRNA(Ile). The protein is Isoleucine--tRNA ligase of Cyanothece sp. (strain PCC 7425 / ATCC 29141).